The chain runs to 131 residues: Small ribosomal subunit protein uS8 (131 aa).

It belongs to the universal ribosomal protein uS8 family. Part of the 30S ribosomal subunit. Contacts proteins S5 and S12.

One of the primary rRNA binding proteins, it binds directly to 16S rRNA central domain where it helps coordinate assembly of the platform of the 30S subunit. This is Small ribosomal subunit protein uS8 from Sulfurovum sp. (strain NBC37-1).